A 140-amino-acid polypeptide reads, in one-letter code: 3-hydroxyacyl-[acyl-carrier-protein] dehydratase FabZ (140 aa).

The active site involves His47.

This sequence belongs to the thioester dehydratase family. FabZ subfamily.

Its subcellular location is the cytoplasm. It catalyses the reaction a (3R)-hydroxyacyl-[ACP] = a (2E)-enoyl-[ACP] + H2O. In terms of biological role, involved in unsaturated fatty acids biosynthesis. Catalyzes the dehydration of short chain beta-hydroxyacyl-ACPs and long chain saturated and unsaturated beta-hydroxyacyl-ACPs. The protein is 3-hydroxyacyl-[acyl-carrier-protein] dehydratase FabZ of Streptococcus uberis (strain ATCC BAA-854 / 0140J).